Here is a 296-residue protein sequence, read N- to C-terminus: Origin of replication complex subunit 6 (296 aa).

Residues 212 to 296 (PSKRKHDDDS…MALEVSSAAN (85 aa)) are disordered. Acidic residues predominate over residues 220 to 236 (DSDSSGESSGDDQDELD). The segment covering 254–264 (WKSSVLSSNKQ) has biased composition (polar residues).

It belongs to the ORC6 family. Component of the origin recognition complex (ORC) composed of at least ORC1, ORC2, ORC3, ORC4, ORC5 and ORC6. ORC is regulated in a cell-cycle and development dependent manner. It is sequentially assembled at the exit from anaphase of mitosis and disassembled as cells enter S phase.

Its subcellular location is the nucleus. Its function is as follows. Component of the origin recognition complex (ORC) that binds origins of replication. DNA-binding is ATP-dependent. The specific DNA sequences that define origins of replication have not been identified yet. ORC is required to assemble the pre-replication complex necessary to initiate DNA replication. This chain is Origin of replication complex subunit 6, found in Oryza sativa subsp. indica (Rice).